The sequence spans 394 residues: MNKYKRIFLVVMDSVGIGEAPDAEQFGDLGSDTIGHIAEHMNGLQMPNMVKLGLGNIREMKGISKVEKPLGYYTKMQEKSTGKDTMTGHWEIMGLYIDTPFQVFPEGFPKELLDELEEKTGRKIIGNKPASGTEILDELGQEQMETGSLIVYTSADSVLQIAAHEEVVPLDELYKICKIARELTLDEKYMVGRVIARPFVGEPGNFTRTPNRHDYALKPFGRTVMNELKDSDYDVIAIGKISDIYDGEGVTESLRTKSNMDGMDKLVDTLNMDFTGLSFLNLVDFDALFGHRRDPQGYGEALQEYDARLPEVFAKLQEDDLLLITADHGNDPIHPGTDHTREYVPLLAYSPSMKEGGQELPLRQTFADIGATVAENFGVKMPEYGTSFLNELKK.

Positions 13, 286, 291, 327, 328, and 339 each coordinate Mn(2+).

This sequence belongs to the phosphopentomutase family. Mn(2+) serves as cofactor.

Its subcellular location is the cytoplasm. It carries out the reaction 2-deoxy-alpha-D-ribose 1-phosphate = 2-deoxy-D-ribose 5-phosphate. It catalyses the reaction alpha-D-ribose 1-phosphate = D-ribose 5-phosphate. Its pathway is carbohydrate degradation; 2-deoxy-D-ribose 1-phosphate degradation; D-glyceraldehyde 3-phosphate and acetaldehyde from 2-deoxy-alpha-D-ribose 1-phosphate: step 1/2. Functionally, isomerase that catalyzes the conversion of deoxy-ribose 1-phosphate (dRib-1-P) and ribose 1-phosphate (Rib-1-P) to deoxy-ribose 5-phosphate (dRib-5-P) and ribose 5-phosphate (Rib-5-P), respectively. The polypeptide is Phosphopentomutase (Bacillus cereus (strain G9842)).